The following is a 132-amino-acid chain: Small ribosomal subunit protein uS8 (132 aa).

This sequence belongs to the universal ribosomal protein uS8 family. Part of the 30S ribosomal subunit. Contacts proteins S5 and S12.

Its function is as follows. One of the primary rRNA binding proteins, it binds directly to 16S rRNA central domain where it helps coordinate assembly of the platform of the 30S subunit. This chain is Small ribosomal subunit protein uS8, found in Rhizobium etli (strain CIAT 652).